Reading from the N-terminus, the 234-residue chain is Leucyl/phenylalanyl-tRNA--protein transferase (234 aa).

This sequence belongs to the L/F-transferase family.

The protein resides in the cytoplasm. It catalyses the reaction N-terminal L-lysyl-[protein] + L-leucyl-tRNA(Leu) = N-terminal L-leucyl-L-lysyl-[protein] + tRNA(Leu) + H(+). The catalysed reaction is N-terminal L-arginyl-[protein] + L-leucyl-tRNA(Leu) = N-terminal L-leucyl-L-arginyl-[protein] + tRNA(Leu) + H(+). The enzyme catalyses L-phenylalanyl-tRNA(Phe) + an N-terminal L-alpha-aminoacyl-[protein] = an N-terminal L-phenylalanyl-L-alpha-aminoacyl-[protein] + tRNA(Phe). Functions in the N-end rule pathway of protein degradation where it conjugates Leu, Phe and, less efficiently, Met from aminoacyl-tRNAs to the N-termini of proteins containing an N-terminal arginine or lysine. The polypeptide is Leucyl/phenylalanyl-tRNA--protein transferase (Syntrophobacter fumaroxidans (strain DSM 10017 / MPOB)).